The sequence spans 114 residues: Probable 4-amino-4-deoxy-L-arabinose-phosphoundecaprenol flippase subunit ArnE (114 aa).

The next 3 membrane-spanning stretches (helical) occupy residues 41-61 (MWLW…LLVL), 64-84 (MDVG…TLVG), and 91-111 (PVDP…FQLG).

It belongs to the ArnE family. In terms of assembly, heterodimer of ArnE and ArnF.

Its subcellular location is the cell inner membrane. Its pathway is bacterial outer membrane biogenesis; lipopolysaccharide biosynthesis. In terms of biological role, translocates 4-amino-4-deoxy-L-arabinose-phosphoundecaprenol (alpha-L-Ara4N-phosphoundecaprenol) from the cytoplasmic to the periplasmic side of the inner membrane. This Pseudomonas savastanoi pv. phaseolicola (strain 1448A / Race 6) (Pseudomonas syringae pv. phaseolicola (strain 1448A / Race 6)) protein is Probable 4-amino-4-deoxy-L-arabinose-phosphoundecaprenol flippase subunit ArnE.